A 45-amino-acid polypeptide reads, in one-letter code: Protein PsbN (45 aa).

Residues 12–30 (FLSRSLVSFTGYALYTAFG) traverse the membrane as a helical segment.

The protein belongs to the PsbN family.

Its subcellular location is the plastid. It localises to the chloroplast thylakoid membrane. In terms of biological role, may play a role in photosystem I and II biogenesis. The chain is Protein PsbN from Adiantum capillus-veneris (Maidenhair fern).